Here is a 227-residue protein sequence, read N- to C-terminus: MAYPLQLGFQDATSPIMEELLHFHDHTLMIVFLISSLVLYIISLMLTTKLTHTSTMDAQEVETIWTILPAIILILIALPSLRILYMMDEINNPSLTIKTMGHQWYWSYEYTDYEDLTFDSYMIPTSDLKPGELRLLEVDNRVVLPMEMTIRMLISSEDVLHSWAVPSLGLKTDAIPGRLNQTTLISTRPGLYYGQCSEICGSNHSFMPIVLELVPLKHFEKWSTSML.

The Mitochondrial intermembrane segment spans residues 1–14 (MAYPLQLGFQDATS). Residues 15–45 (PIMEELLHFHDHTLMIVFLISSLVLYIISLM) traverse the membrane as a helical segment. Residues 46-59 (LTTKLTHTSTMDAQ) are Mitochondrial matrix-facing. The helical transmembrane segment at 60 to 87 (EVETIWTILPAIILILIALPSLRILYMM) threads the bilayer. Topologically, residues 88–227 (DEINNPSLTI…HFEKWSTSML (140 aa)) are mitochondrial intermembrane. The Cu cation site is built by His161, Cys196, Glu198, Cys200, His204, and Met207. Glu198 contributes to the Mg(2+) binding site.

The protein belongs to the cytochrome c oxidase subunit 2 family. Component of the cytochrome c oxidase (complex IV, CIV), a multisubunit enzyme composed of 14 subunits. The complex is composed of a catalytic core of 3 subunits MT-CO1, MT-CO2 and MT-CO3, encoded in the mitochondrial DNA, and 11 supernumerary subunits COX4I, COX5A, COX5B, COX6A, COX6B, COX6C, COX7A, COX7B, COX7C, COX8 and NDUFA4, which are encoded in the nuclear genome. The complex exists as a monomer or a dimer and forms supercomplexes (SCs) in the inner mitochondrial membrane with NADH-ubiquinone oxidoreductase (complex I, CI) and ubiquinol-cytochrome c oxidoreductase (cytochrome b-c1 complex, complex III, CIII), resulting in different assemblies (supercomplex SCI(1)III(2)IV(1) and megacomplex MCI(2)III(2)IV(2)). Found in a complex with TMEM177, COA6, COX18, COX20, SCO1 and SCO2. Interacts with TMEM177 in a COX20-dependent manner. Interacts with COX20. Interacts with COX16. The cofactor is Cu cation.

Its subcellular location is the mitochondrion inner membrane. The enzyme catalyses 4 Fe(II)-[cytochrome c] + O2 + 8 H(+)(in) = 4 Fe(III)-[cytochrome c] + 2 H2O + 4 H(+)(out). In terms of biological role, component of the cytochrome c oxidase, the last enzyme in the mitochondrial electron transport chain which drives oxidative phosphorylation. The respiratory chain contains 3 multisubunit complexes succinate dehydrogenase (complex II, CII), ubiquinol-cytochrome c oxidoreductase (cytochrome b-c1 complex, complex III, CIII) and cytochrome c oxidase (complex IV, CIV), that cooperate to transfer electrons derived from NADH and succinate to molecular oxygen, creating an electrochemical gradient over the inner membrane that drives transmembrane transport and the ATP synthase. Cytochrome c oxidase is the component of the respiratory chain that catalyzes the reduction of oxygen to water. Electrons originating from reduced cytochrome c in the intermembrane space (IMS) are transferred via the dinuclear copper A center (CU(A)) of subunit 2 and heme A of subunit 1 to the active site in subunit 1, a binuclear center (BNC) formed by heme A3 and copper B (CU(B)). The BNC reduces molecular oxygen to 2 water molecules using 4 electrons from cytochrome c in the IMS and 4 protons from the mitochondrial matrix. The sequence is that of Cytochrome c oxidase subunit 2 (MT-CO2) from Rhinoceros unicornis (Greater Indian rhinoceros).